A 226-amino-acid chain; its full sequence is PKHD-type hydroxylase Abu_0724 (226 aa).

Positions 78–178 constitute a Fe2OG dioxygenase domain; that stretch reads HIISPFFNKY…RMVSFMWIQS (101 aa). Fe cation contacts are provided by histidine 96, aspartate 98, and histidine 159. Arginine 169 is a 2-oxoglutarate binding site.

The cofactor is Fe(2+). It depends on L-ascorbate as a cofactor.

In Aliarcobacter butzleri (strain RM4018) (Arcobacter butzleri), this protein is PKHD-type hydroxylase Abu_0724.